A 1064-amino-acid polypeptide reads, in one-letter code: MPKRADIKKILVIGSGPIIIGQAAEFDYSGTQASLSLREEGYSVVLVNSNPATIMTDTEIADQVYIEPLTLPFIKRILRKERPDALLATIGGQTALNLAKELAEDGILEELKIELLGTKLKAIEAAEDREKFKQLMEALKEPVPESRIARTLEQAVHFADQIGYPIIVRPAYTLGGTGGEIVENSEQLTEVAKNGLELSPVTQVLIEKSIAGYKEIEFEVMRDGNDNALIVASMENFDPVGIHTVDSIVVSPVQTLSDREYQMLRDAALKIIRALKIEGGVNIQLALDPDSLRYYIIEVNPRVSRSSALASKATGYPIAKMAAKIAIGLTLDEIVNPVTGTTKAEFEPALDYVAVKIPRWPFDKFAEADRELGTQMKATGEVMAIGRNFETALMKAIRSLEIGTFALDDLTYSDLSNQDLLNRLMPATDERLFMVADLLRRGITIGQIHEKSQIDEFFLDKILHLIEIEKELKMHVLDFKILKIAKENGFPDVTIARYWQLEEKELRHLRKKEDLFPVYKMVDTVAGEFSSKTPYYYSTYELENESLKEKRPSVLVVGSGPIRIGQGVEFDYATVHCVKAIQKAGYKAIVINSNPETVSTDFSVSDKLYFEPLTLEDVLNVIDLEKPIGVVVQFGGQTAINLAGRLENNGVKLLGTSLKDINRSEDREDFNQVIKKLDLSQPFGKTATTVTQALSVAEEVGYPLLIRPSYVLGGRAMEIVTNRQDLSDYMKRAVKVSLKHPVLIDSYLTGREAEIDLLSDGQTIIVPGIMEHIERAGVHSGDSMSVYPSQYLDQNVQEQMLDAAFKLAKELHTIGLMNVQFVIHEQQAYVIEVNPRASRTLPFISKATDLPLAQLATRVMLGEKLADLGFKSGLMAPKKLVYVKALVFSFNKLPKVDSSLGPEMKSTGEVMGVDRNLAKALYKAFVAAGFKVHEHGNVLFTIADRDKKEALALAKRFDELGYVLWATAGTSSFLHENHLPVRQLGKISEDQLNPVTAMRQGKLQIVINRLKTDEPLESDGRAIRAAAIENGVPLFTSLDTVAAFLQVLESRSFNVSAINKGDKS.

The tract at residues 1–401 (MPKRADIKKI…ALMKAIRSLE (401 aa)) is carboxyphosphate synthetic domain. Positions 129, 169, 175, 176, 208, 210, 215, 241, 242, 243, 284, and 298 each coordinate ATP. Residues 133–327 (KQLMEALKEP…IAKMAAKIAI (195 aa)) form the ATP-grasp 1 domain. Gln284, Glu298, and Asn300 together coordinate Mg(2+). Residues Gln284, Glu298, and Asn300 each contribute to the Mn(2+) site. The tract at residues 402-546 (IGTFALDDLT…YSTYELENES (145 aa)) is oligomerization domain. Residues 547 to 929 (LKEKRPSVLV…ALYKAFVAAG (383 aa)) form a carbamoyl phosphate synthetic domain region. An ATP-grasp 2 domain is found at 671–861 (NQVIKKLDLS…LAQLATRVML (191 aa)). Residues Arg707, Ser746, Leu748, Glu752, Gly777, Val778, His779, Ser780, Gln820, and Glu832 each coordinate ATP. Positions 820, 832, and 834 each coordinate Mg(2+). Gln820, Glu832, and Asn834 together coordinate Mn(2+). Positions 930–1064 (FKVHEHGNVL…VSAINKGDKS (135 aa)) constitute an MGS-like domain. Residues 930 to 1064 (FKVHEHGNVL…VSAINKGDKS (135 aa)) form an allosteric domain region.

The protein belongs to the CarB family. As to quaternary structure, composed of two chains; the small (or glutamine) chain promotes the hydrolysis of glutamine to ammonia, which is used by the large (or ammonia) chain to synthesize carbamoyl phosphate. Tetramer of heterodimers (alpha,beta)4. Requires Mg(2+) as cofactor. Mn(2+) serves as cofactor.

It catalyses the reaction hydrogencarbonate + L-glutamine + 2 ATP + H2O = carbamoyl phosphate + L-glutamate + 2 ADP + phosphate + 2 H(+). The catalysed reaction is hydrogencarbonate + NH4(+) + 2 ATP = carbamoyl phosphate + 2 ADP + phosphate + 2 H(+). It participates in amino-acid biosynthesis; L-arginine biosynthesis; carbamoyl phosphate from bicarbonate: step 1/1. It functions in the pathway pyrimidine metabolism; UMP biosynthesis via de novo pathway; (S)-dihydroorotate from bicarbonate: step 1/3. Large subunit of the glutamine-dependent carbamoyl phosphate synthetase (CPSase). CPSase catalyzes the formation of carbamoyl phosphate from the ammonia moiety of glutamine, carbonate, and phosphate donated by ATP, constituting the first step of 2 biosynthetic pathways, one leading to arginine and/or urea and the other to pyrimidine nucleotides. The large subunit (synthetase) binds the substrates ammonia (free or transferred from glutamine from the small subunit), hydrogencarbonate and ATP and carries out an ATP-coupled ligase reaction, activating hydrogencarbonate by forming carboxy phosphate which reacts with ammonia to form carbamoyl phosphate. The sequence is that of Carbamoyl phosphate synthase large chain from Oenococcus oeni (strain ATCC BAA-331 / PSU-1).